The following is a 304-amino-acid chain: Bifunctional protein FolD (304 aa).

Residues 170–172 (GRS), serine 195, and isoleucine 236 contribute to the NADP(+) site.

This sequence belongs to the tetrahydrofolate dehydrogenase/cyclohydrolase family. Homodimer.

It carries out the reaction (6R)-5,10-methylene-5,6,7,8-tetrahydrofolate + NADP(+) = (6R)-5,10-methenyltetrahydrofolate + NADPH. The catalysed reaction is (6R)-5,10-methenyltetrahydrofolate + H2O = (6R)-10-formyltetrahydrofolate + H(+). The protein operates within one-carbon metabolism; tetrahydrofolate interconversion. Its function is as follows. Catalyzes the oxidation of 5,10-methylenetetrahydrofolate to 5,10-methenyltetrahydrofolate and then the hydrolysis of 5,10-methenyltetrahydrofolate to 10-formyltetrahydrofolate. The polypeptide is Bifunctional protein FolD (Anaplasma phagocytophilum (strain HZ)).